Here is a 1462-residue protein sequence, read N- to C-terminus: DNA polymerase alpha catalytic subunit (1462 aa).

2 disordered regions span residues 1–33 and 98–123; these read MAPVHGDDSLSDSGSFVSSRARREKKSKKGRQE and DLEDDALDADEKGKDGKARNKDKRNV. Residues 20–29 show a composition bias toward basic residues; the sequence is RARREKKSKK. A compositionally biased stretch (basic and acidic residues) spans 106 to 116; it reads ADEKGKDGKAR. The residue at position 174 (threonine 174) is a Phosphothreonine. A phosphoserine mark is found at serine 186, serine 190, and serine 209. Position 224 is an N6-acetyllysine (lysine 224). Positions 232 to 251 are disordered; that stretch reads DVQVESTEEEQESGAMEFED. Threonine 406 carries the phosphothreonine modification. A DNA-binding region spans residues 650–715; it reads RINVCKAPHW…YHLSELVQQI (66 aa). The residue at position 970 (lysine 970) is an N6-succinyllysine. The DNA-binding stretch occupies residues 1245–1376; sequence QFRVHHYHKD…TGPLCPACMK (132 aa). Zn(2+) is bound by residues cysteine 1283, cysteine 1286, cysteine 1310, cysteine 1315, cysteine 1348, cysteine 1353, cysteine 1371, and cysteine 1374. A CysA-type zinc finger spans residues 1283-1318; the sequence is CPTCGTENIYDNVFDGSGTDMEPSLYRCSNIDCKAS. The CysB motif signature appears at 1348 to 1374; the sequence is CEEPTCRNRTRHLPLQFSRTGPLCPAC.

Belongs to the DNA polymerase type-B family. In terms of assembly, component of the alpha DNA polymerase complex (also known as the alpha DNA polymerase-primase complex) consisting of four subunits: the catalytic subunit POLA1, the regulatory subunit POLA2, and the primase complex subunits PRIM1 and PRIM2 respectively. Interacts with PARP1; this interaction functions as part of the control of replication fork progression. Interacts with MCM10 and WDHD1; these interactions recruit the polymerase alpha complex to the pre-replicative complex bound to DNA. Interacts with RPA1; this interaction stabilizes the replicative complex and reduces the misincorporation rate of DNA polymerase alpha by acting as a fidelity clamp. (Microbial infection) Interacts with SV40 Large T antigen; this interaction allows viral DNA replication. As to quaternary structure, (Microbial infection) Interacts with herpes simplex virus 1/HHV-1 replication origin-binding protein UL9. In terms of processing, a 165 kDa form is probably produced by proteolytic cleavage at Lys-124.

It is found in the nucleus. It localises to the cytoplasm. The protein resides in the cytosol. The enzyme catalyses DNA(n) + a 2'-deoxyribonucleoside 5'-triphosphate = DNA(n+1) + diphosphate. With respect to regulation, autoinhibited in apo-primosome, where the zinc motif of POLA1 and oligonucleotide/olicosaccharide-binding domain of POLA2 are placed into the active site blocking RNA:DNA duplex entry. Catalytic subunit of the DNA polymerase alpha complex (also known as the alpha DNA polymerase-primase complex) which plays an essential role in the initiation of DNA synthesis. During the S phase of the cell cycle, the DNA polymerase alpha complex (composed of a catalytic subunit POLA1, a regulatory subunit POLA2 and two primase subunits PRIM1 and PRIM2) is recruited to DNA at the replicative forks via direct interactions with MCM10 and WDHD1. The primase subunit of the polymerase alpha complex initiates DNA synthesis by oligomerising short RNA primers on both leading and lagging strands. These primers are initially extended by the polymerase alpha catalytic subunit and subsequently transferred to polymerase delta and polymerase epsilon for processive synthesis on the lagging and leading strand, respectively. The reason this transfer occurs is because the polymerase alpha has limited processivity and lacks intrinsic 3' exonuclease activity for proofreading error, and therefore is not well suited for replicating long complexes. In the cytosol, responsible for a substantial proportion of the physiological concentration of cytosolic RNA:DNA hybrids, which are necessary to prevent spontaneous activation of type I interferon responses. This Homo sapiens (Human) protein is DNA polymerase alpha catalytic subunit (POLA1).